A 380-amino-acid chain; its full sequence is Flap endonuclease 1-A (380 aa).

The interval 1-105 (MGIKGLTKLL…EELAKRFSKR (105 aa)) is N-domain. Asp34 is a binding site for Mg(2+). Residue Arg71 participates in DNA binding. The Mg(2+) site is built by Asp87, Glu159, Glu161, Asp180, and Asp182. The I-domain stretch occupies residues 123–254 (AVEKLSKRTV…QTALKLIRQH (132 aa)). Glu159 serves as a coordination point for DNA. DNA is bound by residues Gly232 and Asp234. Residue Asp234 participates in Mg(2+) binding. An interaction with PCNA region spans residues 336–344 (SQGRLESFF). Positions 351–380 (SAPLKRKETSDKTSKAAAANKKTKAGGKKK) are disordered. Residues 355–364 (KRKETSDKTS) are compositionally biased toward basic and acidic residues. The span at 371–380 (KKTKAGGKKK) shows a compositional bias: basic residues.

This sequence belongs to the XPG/RAD2 endonuclease family. FEN1 subfamily. In terms of assembly, interacts with PCNA. Three molecules of FEN1 bind to one PCNA trimer with each molecule binding to one PCNA monomer. PCNA stimulates the nuclease activity without altering cleavage specificity. Requires Mg(2+) as cofactor. Post-translationally, phosphorylated. Phosphorylation upon DNA damage induces relocalization to the nuclear plasma.

The protein localises to the nucleus. It localises to the nucleolus. It is found in the nucleoplasm. The protein resides in the mitochondrion. Structure-specific nuclease with 5'-flap endonuclease and 5'-3' exonuclease activities involved in DNA replication and repair. During DNA replication, cleaves the 5'-overhanging flap structure that is generated by displacement synthesis when DNA polymerase encounters the 5'-end of a downstream Okazaki fragment. It enters the flap from the 5'-end and then tracks to cleave the flap base, leaving a nick for ligation. Also involved in the long patch base excision repair (LP-BER) pathway, by cleaving within the apurinic/apyrimidinic (AP) site-terminated flap. Acts as a genome stabilization factor that prevents flaps from equilibrating into structures that lead to duplications and deletions. Also possesses 5'-3' exonuclease activity on nicked or gapped double-stranded DNA, and exhibits RNase H activity. Also involved in replication and repair of rDNA and in repairing mitochondrial DNA. In Sorghum bicolor (Sorghum), this protein is Flap endonuclease 1-A.